Reading from the N-terminus, the 372-residue chain is 4-hydroxy-3-methylbut-2-en-1-yl diphosphate synthase (flavodoxin) (372 aa).

Residues Cys-270, Cys-273, Cys-305, and Glu-312 each coordinate [4Fe-4S] cluster.

It belongs to the IspG family. [4Fe-4S] cluster serves as cofactor.

It carries out the reaction (2E)-4-hydroxy-3-methylbut-2-enyl diphosphate + oxidized [flavodoxin] + H2O + 2 H(+) = 2-C-methyl-D-erythritol 2,4-cyclic diphosphate + reduced [flavodoxin]. It functions in the pathway isoprenoid biosynthesis; isopentenyl diphosphate biosynthesis via DXP pathway; isopentenyl diphosphate from 1-deoxy-D-xylulose 5-phosphate: step 5/6. Functionally, converts 2C-methyl-D-erythritol 2,4-cyclodiphosphate (ME-2,4cPP) into 1-hydroxy-2-methyl-2-(E)-butenyl 4-diphosphate. The polypeptide is 4-hydroxy-3-methylbut-2-en-1-yl diphosphate synthase (flavodoxin) (Aliivibrio salmonicida (strain LFI1238) (Vibrio salmonicida (strain LFI1238))).